The following is a 466-amino-acid chain: 3-isopropylmalate dehydratase large subunit (466 aa).

3 residues coordinate [4Fe-4S] cluster: Cys-347, Cys-407, and Cys-410.

It belongs to the aconitase/IPM isomerase family. LeuC type 1 subfamily. In terms of assembly, heterodimer of LeuC and LeuD. [4Fe-4S] cluster serves as cofactor.

The enzyme catalyses (2R,3S)-3-isopropylmalate = (2S)-2-isopropylmalate. Its pathway is amino-acid biosynthesis; L-leucine biosynthesis; L-leucine from 3-methyl-2-oxobutanoate: step 2/4. Its function is as follows. Catalyzes the isomerization between 2-isopropylmalate and 3-isopropylmalate, via the formation of 2-isopropylmaleate. The sequence is that of 3-isopropylmalate dehydratase large subunit from Escherichia coli O139:H28 (strain E24377A / ETEC).